The following is a 182-amino-acid chain: Protein transport protein gos1 (182 aa).

Over 1–163 the chain is Cytoplasmic; sequence MKSMLLRDSV…RKTSIRRRRD (163 aa). A helical; Anchor for type IV membrane protein transmembrane segment spans residues 164-181; that stretch reads SIILALLISVLMLLFLFF. Position 182 (His-182) is a topological domain, vesicular.

It belongs to the GOSR1 family. Component of a SNARE complex consisting of sed5, gos1, ykt6, and sft1.

The protein localises to the golgi apparatus membrane. Its function is as follows. Nonessential SNARE involved in retrograde transport within the Golgi complex. The chain is Protein transport protein gos1 (gos1) from Schizosaccharomyces pombe (strain 972 / ATCC 24843) (Fission yeast).